Here is a 302-residue protein sequence, read N- to C-terminus: Sulfate adenylyltransferase subunit 2 (302 aa).

The protein belongs to the PAPS reductase family. CysD subfamily. In terms of assembly, heterodimer composed of CysD, the smaller subunit, and CysN.

It carries out the reaction sulfate + ATP + H(+) = adenosine 5'-phosphosulfate + diphosphate. Its pathway is sulfur metabolism; hydrogen sulfide biosynthesis; sulfite from sulfate: step 1/3. In terms of biological role, with CysN forms the ATP sulfurylase (ATPS) that catalyzes the adenylation of sulfate producing adenosine 5'-phosphosulfate (APS) and diphosphate, the first enzymatic step in sulfur assimilation pathway. APS synthesis involves the formation of a high-energy phosphoric-sulfuric acid anhydride bond driven by GTP hydrolysis by CysN coupled to ATP hydrolysis by CysD. In Xanthomonas oryzae pv. oryzae (strain MAFF 311018), this protein is Sulfate adenylyltransferase subunit 2.